The chain runs to 229 residues: MSQPRPLLSPPETEEQLLAQAQQLSGYTLGELAALAGLVTPENLKRDKGWIGVLLEIWLGASAGSKPEQDFAALGVELKTIPVDSLGRPLETTFVCVAPLTGNSGVTWETSHVRHKLKRVLWIPVEGERSIPLAQRRVGSPLLWSPNEEEDRQLREDWEELMDMIVLGQVERITARHGEYLQIRPKAANAKALTEAIGARGERILTLPRGFYLKKNFTSALLARHFLIQ.

It belongs to the MutH family.

It is found in the cytoplasm. In terms of biological role, sequence-specific endonuclease that cleaves unmethylated GATC sequences. It is involved in DNA mismatch repair. This Shigella dysenteriae serotype 1 (strain Sd197) protein is DNA mismatch repair protein MutH.